The primary structure comprises 866 residues: Coiled-coil domain-containing protein 178 (866 aa).

Positions 1–21 (MPENEKEPAQPTTNEDALDTG) are disordered. Coiled coils occupy residues 157–266 (ELKK…DYMA), 292–403 (EVME…DQYC), 439–480 (KDLT…EEEV), 514–539 (KTEELEDKLADLKRIFKGREELLKKL), 570–631 (RRQV…LLKK), and 665–705 (EKCI…REHV).

The chain is Coiled-coil domain-containing protein 178 (Ccdc178) from Mus musculus (Mouse).